The chain runs to 801 residues: Zinc finger Y-chromosomal protein (801 aa).

At Ser270 the chain carries Phosphoserine. The C2H2-type 1 zinc-finger motif lies at 421–443; it reads YPCMICGKKFKSRGFLKRHMKNH. The segment at 452-474 adopts a C2H2-type 2; atypical zinc-finger fold; the sequence is YHCTDCDYTTNKKISLHNHLESH. 11 C2H2-type zinc fingers span residues 484-506, 515-538, 544-566, 572-595, 601-623, 629-652, 658-680, 686-709, 715-737, 743-766, and 772-795; these read IECD…KMVH, HKCK…LAVH, HICV…MRIH, YQCQ…KTKH, FKCD…TLVH, HQCL…ISVH, HKCE…VAVH, HQCR…LSVH, FRCK…MKTH, YQCE…ISIH, and HRCE…MRHH.

The protein belongs to the krueppel C2H2-type zinc-finger protein family. ZFX/ZFY subfamily.

It is found in the nucleus. Probable transcriptional activator. Binds to the consensus sequence 5'-AGGCCY-3'. In Homo sapiens (Human), this protein is Zinc finger Y-chromosomal protein (ZFY).